The sequence spans 105 residues: MAIRYPMAVGLNKGYKVTKNVSKPRHCRRRGRLTKHTKFVRDMIREVCGFAPYERRAMELLKVSKDKRALKFIKKRVGTHIRAKRKREELSNVLAAMRKAAAKKD.

The protein belongs to the eukaryotic ribosomal protein eL36 family. Component of the large ribosomal subunit.

It is found in the cytoplasm. The protein localises to the cytosol. In terms of biological role, component of the large ribosomal subunit. The ribosome is a large ribonucleoprotein complex responsible for the synthesis of proteins in the cell. The chain is Large ribosomal subunit protein eL36 (RPL36) from Gallus gallus (Chicken).